Reading from the N-terminus, the 111-residue chain is UPF0060 membrane protein XAC3064 (111 aa).

Helical transmembrane passes span 8–28, 32–52, 64–84, and 91–111; these read LLLF…PYLW, GGSV…VWLL, AAYG…VDGV, and LLGA…PRSA.

It belongs to the UPF0060 family.

It localises to the cell inner membrane. The protein is UPF0060 membrane protein XAC3064 of Xanthomonas axonopodis pv. citri (strain 306).